Here is a 428-residue protein sequence, read N- to C-terminus: Histone-lysine N-methyltransferase SMYD3 (428 aa).

M1 carries the post-translational modification N-acetylmethionine. Residues 4-240 (LKVEKFTTAN…AGEELTICYL (237 aa)) enclose the SET domain. S-adenosyl-L-methionine is bound at residue 14 to 16 (RGN). Zn(2+) is bound by residues C49, C52, C62, C65, C71, C75, H83, and C87. The MYND-type zinc finger occupies 49-87 (CDRCLLGKEKLMRCSQCRIAKYCSAKCQKKAWPDHRREC). Residues Y124, N132, 205-206 (NH), Y239, and F259 each bind S-adenosyl-L-methionine. A C-terminal domain; essential for histone methyltransferase activity, nuclear localization and mediates interaction with HSP90AA1 region spans residues 272–428 (DADMLTGDEQ…EECDANIRAS (157 aa)).

Belongs to the class V-like SAM-binding methyltransferase superfamily. Histone-lysine methyltransferase family. As to quaternary structure, interacts with HSPCA. Interacts with HELZ. Interacts with POLR2A; the interaction may be indirect and may be mediated by HELZ. Interacts with HSP90AA1; this interaction enhances SMYD3 histone-lysine N-methyltransferase.

The protein localises to the cytoplasm. Its subcellular location is the nucleus. The enzyme catalyses L-lysyl(4)-[histone H3] + 3 S-adenosyl-L-methionine = N(6),N(6),N(6)-trimethyl-L-lysyl(4)-[histone H3] + 3 S-adenosyl-L-homocysteine + 3 H(+). Its activity is regulated as follows. Histone methyltransferase activity strongly stimulated by HSPCA. Its function is as follows. Histone methyltransferase. Specifically methylates 'Lys-4' of histone H3, inducing di- and tri-methylation, but not monomethylation. Also methylates 'Lys-5' of histone H4. Plays an important role in transcriptional activation as a member of an RNA polymerase complex. Binds DNA containing 5'-CCCTCC-3' or 5'-GAGGGG-3' sequences. In Mus musculus (Mouse), this protein is Histone-lysine N-methyltransferase SMYD3 (Smyd3).